Reading from the N-terminus, the 570-residue chain is Glycine--tRNA ligase (570 aa).

Residues Arg99 and Glu165 each coordinate substrate. ATP-binding positions include 197–199 (RNE), 207–212 (LRLREF), 324–325 (EC), and 443–446 (GIDR). 212–216 (FTQAE) lines the substrate pocket. 439-443 (EPSFG) is a binding site for substrate.

This sequence belongs to the class-II aminoacyl-tRNA synthetase family.

Its subcellular location is the cytoplasm. It carries out the reaction tRNA(Gly) + glycine + ATP = glycyl-tRNA(Gly) + AMP + diphosphate. Its function is as follows. Catalyzes the attachment of glycine to tRNA(Gly). The sequence is that of Glycine--tRNA ligase from Thermococcus gammatolerans (strain DSM 15229 / JCM 11827 / EJ3).